A 201-amino-acid polypeptide reads, in one-letter code: Large ribosomal subunit protein eL15A (201 aa).

The interval 161 to 182 (SRGLTSIGKKSRGIGKGHRFNN) is disordered. Residues 169–179 (KKSRGIGKGHR) are compositionally biased toward basic residues.

Belongs to the eukaryotic ribosomal protein eL15 family. In terms of assembly, component of the large ribosomal subunit (LSU). Mature yeast ribosomes consist of a small (40S) and a large (60S) subunit. The 40S small subunit contains 1 molecule of ribosomal RNA (18S rRNA) and at least 33 different proteins. The large 60S subunit contains 3 rRNA molecules (25S, 5.8S and 5S rRNA) and at least 46 different proteins.

The protein localises to the cytoplasm. The protein resides in the nucleus. It localises to the nucleolus. Component of the ribosome, a large ribonucleoprotein complex responsible for the synthesis of proteins in the cell. The small ribosomal subunit (SSU) binds messenger RNAs (mRNAs) and translates the encoded message by selecting cognate aminoacyl-transfer RNA (tRNA) molecules. The large subunit (LSU) contains the ribosomal catalytic site termed the peptidyl transferase center (PTC), which catalyzes the formation of peptide bonds, thereby polymerizing the amino acids delivered by tRNAs into a polypeptide chain. The nascent polypeptides leave the ribosome through a tunnel in the LSU and interact with protein factors that function in enzymatic processing, targeting, and the membrane insertion of nascent chains at the exit of the ribosomal tunnel. The chain is Large ribosomal subunit protein eL15A (rpl15) from Schizosaccharomyces pombe (strain 972 / ATCC 24843) (Fission yeast).